The following is a 180-amino-acid chain: MQVKNTEELRRELIELLSEMDVVQRGKFILSSGRESDYYVDIKRAVTEPAVLDVIARLIADAAGEVDRIAGPALGAVPIATAVSLYSRKPLLMIRKEKKGYGTSKLIEGDLQKGDRVAVVEDVTTTGGSLLKAVRAIQENGGIVEKAFVIVDREEGAVDEFKREGITLIPLLSVSDFNHS.

Residues Arg-95, Lys-96, Lys-99, and Glu-121–Ser-129 contribute to the 5-phospho-alpha-D-ribose 1-diphosphate site. Thr-125 and Arg-153 together coordinate orotate.

The protein belongs to the purine/pyrimidine phosphoribosyltransferase family. PyrE subfamily. As to quaternary structure, homodimer. Mg(2+) serves as cofactor.

The enzyme catalyses orotidine 5'-phosphate + diphosphate = orotate + 5-phospho-alpha-D-ribose 1-diphosphate. The protein operates within pyrimidine metabolism; UMP biosynthesis via de novo pathway; UMP from orotate: step 1/2. Its function is as follows. Catalyzes the transfer of a ribosyl phosphate group from 5-phosphoribose 1-diphosphate to orotate, leading to the formation of orotidine monophosphate (OMP). The chain is Orotate phosphoribosyltransferase from Methanothermobacter thermautotrophicus (strain ATCC 29096 / DSM 1053 / JCM 10044 / NBRC 100330 / Delta H) (Methanobacterium thermoautotrophicum).